Reading from the N-terminus, the 536-residue chain is DNA damage-binding protein CMR1 (536 aa).

Basic and acidic residues predominate over residues 36-45; it reads REAGVDDTHR. The interval 36 to 72 is disordered; sequence REAGVDDTHRTVVKKKKSPSVSRGRSASPKVAPVATR. 6 WD repeats span residues 195 to 236, 251 to 291, 346 to 386, 403 to 442, 456 to 495, and 496 to 535; these read LVYE…LSEN, FFTK…SNDI, LSDK…KKPE, DSRLSVSAVSYSPTDNTLVCNGYDDTIRLFDVGSDNLPDD, GRWTSILKARFKQDQDVFAIANMKRAIDIYDSQGQQLAHL, and PTATVPAVISWHPLRNWIAGGNSSGKIFLFTDETVKKEEE.

It belongs to the WD repeat DDB2/WDR76 family.

DNA-binding protein that binds to both single- and double-stranded DNA. Binds preferentially to UV-damaged DNA. May be involved in DNA-metabolic processes. The chain is DNA damage-binding protein CMR1 from Vanderwaltozyma polyspora (strain ATCC 22028 / DSM 70294 / BCRC 21397 / CBS 2163 / NBRC 10782 / NRRL Y-8283 / UCD 57-17) (Kluyveromyces polysporus).